We begin with the raw amino-acid sequence, 320 residues long: Phospho-N-acetylmuramoyl-pentapeptide-transferase (320 aa).

A run of 9 helical transmembrane segments spans residues 5-25 (LWAL…LIKF), 51-71 (MGGL…GAAY), 76-96 (GVVA…IGGI), 124-144 (VVIM…IPMI), 145-165 (GTIN…VGWS), 176-196 (GLLA…AMHM), 198-218 (NHII…FLIF), 233-255 (LALG…LIWF), and 298-318 (WQID…GIFY).

This sequence belongs to the glycosyltransferase 4 family. MraY subfamily. Mg(2+) serves as cofactor.

The protein resides in the cell membrane. The enzyme catalyses UDP-N-acetyl-alpha-D-muramoyl-L-alanyl-gamma-D-glutamyl-L-lysyl-D-alanyl-D-alanine + di-trans,octa-cis-undecaprenyl phosphate = Mur2Ac(oyl-L-Ala-gamma-D-Glu-L-Lys-D-Ala-D-Ala)-di-trans,octa-cis-undecaprenyl diphosphate + UMP. It functions in the pathway cell wall biogenesis; peptidoglycan biosynthesis. Catalyzes the initial step of the lipid cycle reactions in the biosynthesis of the cell wall peptidoglycan: transfers peptidoglycan precursor phospho-MurNAc-pentapeptide from UDP-MurNAc-pentapeptide onto the lipid carrier undecaprenyl phosphate, yielding undecaprenyl-pyrophosphoryl-MurNAc-pentapeptide, known as lipid I. This Leuconostoc citreum (strain KM20) protein is Phospho-N-acetylmuramoyl-pentapeptide-transferase.